The primary structure comprises 465 residues: Putative mannose-1-phosphate guanylyltransferase (465 aa).

It belongs to the mannose-6-phosphate isomerase type 2 family.

The catalysed reaction is alpha-D-mannose 1-phosphate + GTP + H(+) = GDP-alpha-D-mannose + diphosphate. It functions in the pathway nucleotide-sugar biosynthesis; GDP-alpha-D-mannose biosynthesis; GDP-alpha-D-mannose from alpha-D-mannose 1-phosphate (GTP route): step 1/1. The protein operates within bacterial outer membrane biogenesis; LPS O-antigen biosynthesis. The polypeptide is Putative mannose-1-phosphate guanylyltransferase (rfbA) (Vibrio cholerae serotype O1 (strain ATCC 39315 / El Tor Inaba N16961)).